Here is a 200-residue protein sequence, read N- to C-terminus: Probable GTP-binding protein EngB (200 aa).

Residues 23 to 197 form the EngB-type G domain; that stretch reads KNSEVVFIGR…RERVLKDVLG (175 aa). GTP-binding positions include 31-38, 58-62, 83-86, 153-156, and 175-177; these read GRSNVGKS, GKTQL, DLPG, TKMD, and FTA. The Mg(2+) site is built by Ser-38 and Thr-60.

Belongs to the TRAFAC class TrmE-Era-EngA-EngB-Septin-like GTPase superfamily. EngB GTPase family. It depends on Mg(2+) as a cofactor.

Its function is as follows. Necessary for normal cell division and for the maintenance of normal septation. The sequence is that of Probable GTP-binding protein EngB from Wolinella succinogenes (strain ATCC 29543 / DSM 1740 / CCUG 13145 / JCM 31913 / LMG 7466 / NCTC 11488 / FDC 602W) (Vibrio succinogenes).